A 145-amino-acid polypeptide reads, in one-letter code: Basic phospholipase A2 KPA2 (145 aa).

The first 19 residues, 1–19 (MYPAHLLVLVAVCVSLLGA), serve as a signal peptide directing secretion. A propeptide spanning residues 20–27 (ANIPPQPL) is cleaved from the precursor. 7 disulfide bridges follow: Cys38-Cys97, Cys52-Cys144, Cys54-Cys70, Cys69-Cys125, Cys76-Cys118, Cys86-Cys111, and Cys104-Cys116. Tyr53, Gly55, and Gly57 together coordinate Ca(2+). His73 is a catalytic residue. A Ca(2+)-binding site is contributed by Asp74. Residue Asp119 is part of the active site.

Belongs to the phospholipase A2 family. Group I subfamily. D49 sub-subfamily. In terms of assembly, monomer. Requires Ca(2+) as cofactor. Expressed by the venom gland.

Its subcellular location is the secreted. The enzyme catalyses a 1,2-diacyl-sn-glycero-3-phosphocholine + H2O = a 1-acyl-sn-glycero-3-phosphocholine + a fatty acid + H(+). Functionally, snake venom phospholipase A2 (PLA2) that shows anticoagulant and neurotoxic activities. PLA2 catalyzes the calcium-dependent hydrolysis of the 2-acyl groups in 3-sn-phosphoglycerides. The polypeptide is Basic phospholipase A2 KPA2 (Bungarus caeruleus (Indian krait)).